The following is a 404-amino-acid chain: Cysteine desulfurase IscS (404 aa).

Pyridoxal 5'-phosphate-binding positions include 75–76 (AT), asparagine 155, glutamine 183, and 203–205 (SAH). Position 206 is an N6-(pyridoxal phosphate)lysine (lysine 206). Threonine 243 provides a ligand contact to pyridoxal 5'-phosphate. Cysteine 328 serves as the catalytic Cysteine persulfide intermediate. Cysteine 328 is a binding site for [2Fe-2S] cluster.

Belongs to the class-V pyridoxal-phosphate-dependent aminotransferase family. NifS/IscS subfamily. Homodimer. Forms a heterotetramer with IscU, interacts with other sulfur acceptors. It depends on pyridoxal 5'-phosphate as a cofactor.

It is found in the cytoplasm. The catalysed reaction is (sulfur carrier)-H + L-cysteine = (sulfur carrier)-SH + L-alanine. Its pathway is cofactor biosynthesis; iron-sulfur cluster biosynthesis. Its function is as follows. Master enzyme that delivers sulfur to a number of partners involved in Fe-S cluster assembly, tRNA modification or cofactor biosynthesis. Catalyzes the removal of elemental sulfur atoms from cysteine to produce alanine. Functions as a sulfur delivery protein for Fe-S cluster synthesis onto IscU, an Fe-S scaffold assembly protein, as well as other S acceptor proteins. In Ruthia magnifica subsp. Calyptogena magnifica, this protein is Cysteine desulfurase IscS.